The chain runs to 157 residues: Protein Smg homolog (157 aa).

Belongs to the Smg family.

The chain is Protein Smg homolog from Xanthomonas euvesicatoria pv. vesicatoria (strain 85-10) (Xanthomonas campestris pv. vesicatoria).